Reading from the N-terminus, the 1755-residue chain is Transposon Ty1-ER2 Gag-Pol polyprotein (1755 aa).

Composition is skewed to polar residues over residues 1–10 (MESQQLSNYP), 48–60 (TKAN…TPAS), and 127–152 (QSQF…GNTF). Disordered stretches follow at residues 1–93 (MESQ…MMTQ), 126–173 (PQSQ…RPPP), and 352–421 (GSRN…SKST). The span at 153 to 165 (TDSSSADSDMTST) shows a compositional bias: low complexity. The RNA-binding stretch occupies residues 299–401 (NNGIHINNKV…NSKSKTARAH (103 aa)). Over residues 402 to 418 (NVSTSNNSPSTDNDSIS) the composition is skewed to low complexity. Aspartate 461 (for protease activity; shared with dimeric partner) is an active-site residue. The segment at 583-640 (NVHTSESTRKYPYPFIHRMLAHANAQTIRYSLKNNTITYFNESDVDWSSAIDYQCPDC) is integrase-type zinc finger-like. An Integrase catalytic domain is found at 660-835 (NSYEPFQYLH…AGLDISTLLP (176 aa)). Residues aspartate 671 and aspartate 736 each contribute to the Mg(2+) site. Residues 958–1170 (AVSPTDSTPP…SSLGGIGDSN (213 aa)) are disordered. The segment covering 960–969 (SPTDSTPPST) has biased composition (low complexity). Polar residues predominate over residues 1005–1015 (STPQISDIEST). A compositionally biased stretch (basic and acidic residues) spans 1038–1053 (ESSHASKSKDFRHSDS). Composition is skewed to polar residues over residues 1054–1082 (YSDN…QTSE) and 1095–1106 (SIDTSSSESNSL). The Bipartite nuclear localization signal motif lies at 1178–1212 (KKRSLEDNETEIKVSRDTWNTKNMRSLEPPRSKKR). A Reverse transcriptase Ty1/copia-type domain is found at 1338-1476 (NNYYITQLDI…DILGLEIKYQ (139 aa)). Residues aspartate 1346, aspartate 1427, aspartate 1428, aspartate 1610, glutamate 1652, and aspartate 1685 each coordinate Mg(2+). Positions 1610 to 1752 (DASYGNQPYY…IKTFKLLTNK (143 aa)) constitute an RNase H Ty1/copia-type domain.

In terms of assembly, the capsid protein forms a homotrimer, from which the VLPs are assembled. The protease is a homodimer, whose active site consists of two apposed aspartic acid residues. Post-translationally, initially, virus-like particles (VLPs) are composed of the structural unprocessed proteins Gag and Gag-Pol, and also contain the host initiator methionine tRNA (tRNA(i)-Met) which serves as a primer for minus-strand DNA synthesis, and a dimer of genomic Ty RNA. Processing of the polyproteins occurs within the particle and proceeds by an ordered pathway, called maturation. First, the protease (PR) is released by autocatalytic cleavage of the Gag-Pol polyprotein yielding capsid protein p45 and a Pol-p154 precursor protein. This cleavage is a prerequisite for subsequent processing of Pol-p154 at the remaining sites to release the mature structural and catalytic proteins. Maturation takes place prior to the RT reaction and is required to produce transposition-competent VLPs.

It is found in the cytoplasm. The protein resides in the nucleus. The enzyme catalyses DNA(n) + a 2'-deoxyribonucleoside 5'-triphosphate = DNA(n+1) + diphosphate. It catalyses the reaction Endonucleolytic cleavage to 5'-phosphomonoester.. Functionally, capsid protein (CA) is the structural component of the virus-like particle (VLP), forming the shell that encapsulates the retrotransposons dimeric RNA genome. The particles are assembled from trimer-clustered units and there are holes in the capsid shells that allow for the diffusion of macromolecules. CA also has nucleocapsid-like chaperone activity, promoting primer tRNA(i)-Met annealing to the multipartite primer-binding site (PBS), dimerization of Ty1 RNA and initiation of reverse transcription. Its function is as follows. The aspartyl protease (PR) mediates the proteolytic cleavages of the Gag and Gag-Pol polyproteins after assembly of the VLP. In terms of biological role, reverse transcriptase/ribonuclease H (RT) is a multifunctional enzyme that catalyzes the conversion of the retro-elements RNA genome into dsDNA within the VLP. The enzyme displays a DNA polymerase activity that can copy either DNA or RNA templates, and a ribonuclease H (RNase H) activity that cleaves the RNA strand of RNA-DNA heteroduplexes during plus-strand synthesis and hydrolyzes RNA primers. The conversion leads to a linear dsDNA copy of the retrotransposon that includes long terminal repeats (LTRs) at both ends. Integrase (IN) targets the VLP to the nucleus, where a subparticle preintegration complex (PIC) containing at least integrase and the newly synthesized dsDNA copy of the retrotransposon must transit the nuclear membrane. Once in the nucleus, integrase performs the integration of the dsDNA into the host genome. The chain is Transposon Ty1-ER2 Gag-Pol polyprotein (TY1B-ER2) from Saccharomyces cerevisiae (strain ATCC 204508 / S288c) (Baker's yeast).